The chain runs to 206 residues: Large ribosomal subunit protein uL4 (206 aa).

Residues 45 to 85 (QGNRAQKDREQVKHTTKKPWRQKGTGRARAGMSSSPLWRGG) form a disordered region. The segment covering 58–70 (HTTKKPWRQKGTG) has biased composition (basic residues).

This sequence belongs to the universal ribosomal protein uL4 family. As to quaternary structure, part of the 50S ribosomal subunit.

Its function is as follows. One of the primary rRNA binding proteins, this protein initially binds near the 5'-end of the 23S rRNA. It is important during the early stages of 50S assembly. It makes multiple contacts with different domains of the 23S rRNA in the assembled 50S subunit and ribosome. Forms part of the polypeptide exit tunnel. This Burkholderia mallei (strain NCTC 10247) protein is Large ribosomal subunit protein uL4.